The primary structure comprises 301 residues: Methionyl-tRNA formyltransferase (301 aa).

Residue 109–112 (SLLP) coordinates (6S)-5,6,7,8-tetrahydrofolate.

This sequence belongs to the Fmt family.

The catalysed reaction is L-methionyl-tRNA(fMet) + (6R)-10-formyltetrahydrofolate = N-formyl-L-methionyl-tRNA(fMet) + (6S)-5,6,7,8-tetrahydrofolate + H(+). Attaches a formyl group to the free amino group of methionyl-tRNA(fMet). The formyl group appears to play a dual role in the initiator identity of N-formylmethionyl-tRNA by promoting its recognition by IF2 and preventing the misappropriation of this tRNA by the elongation apparatus. In Ruegeria pomeroyi (strain ATCC 700808 / DSM 15171 / DSS-3) (Silicibacter pomeroyi), this protein is Methionyl-tRNA formyltransferase.